The chain runs to 128 residues: Transcription antitermination protein NusB (128 aa).

The protein belongs to the NusB family.

Functionally, involved in transcription antitermination. Required for transcription of ribosomal RNA (rRNA) genes. Binds specifically to the boxA antiterminator sequence of the ribosomal RNA (rrn) operons. This is Transcription antitermination protein NusB from Staphylococcus carnosus (strain TM300).